The following is a 729-amino-acid chain: Fatty acid oxidation complex subunit alpha (729 aa).

The interval 1–189 (MLYKGDTLYL…KIGLVDGVVK (189 aa)) is enoyl-CoA hydratase/isomerase. Aspartate 296 lines the substrate pocket. Positions 311 to 729 (ETPKQAAVLG…ARPVGDLKTA (419 aa)) are 3-hydroxyacyl-CoA dehydrogenase. Residues methionine 324, aspartate 343, 400-402 (VVE), lysine 407, and serine 429 each bind NAD(+). Histidine 450 serves as the catalytic For 3-hydroxyacyl-CoA dehydrogenase activity. Asparagine 453 serves as a coordination point for NAD(+). 2 residues coordinate substrate: asparagine 500 and tyrosine 660. The interval 708 to 729 (RHNEPYYPPVEPARPVGDLKTA) is disordered.

In the N-terminal section; belongs to the enoyl-CoA hydratase/isomerase family. This sequence in the C-terminal section; belongs to the 3-hydroxyacyl-CoA dehydrogenase family. As to quaternary structure, heterotetramer of two alpha chains (FadB) and two beta chains (FadA).

The catalysed reaction is a (3S)-3-hydroxyacyl-CoA + NAD(+) = a 3-oxoacyl-CoA + NADH + H(+). It catalyses the reaction a (3S)-3-hydroxyacyl-CoA = a (2E)-enoyl-CoA + H2O. It carries out the reaction a 4-saturated-(3S)-3-hydroxyacyl-CoA = a (3E)-enoyl-CoA + H2O. The enzyme catalyses (3S)-3-hydroxybutanoyl-CoA = (3R)-3-hydroxybutanoyl-CoA. The catalysed reaction is a (3Z)-enoyl-CoA = a 4-saturated (2E)-enoyl-CoA. It catalyses the reaction a (3E)-enoyl-CoA = a 4-saturated (2E)-enoyl-CoA. The protein operates within lipid metabolism; fatty acid beta-oxidation. Its function is as follows. Involved in the aerobic and anaerobic degradation of long-chain fatty acids via beta-oxidation cycle. Catalyzes the formation of 3-oxoacyl-CoA from enoyl-CoA via L-3-hydroxyacyl-CoA. It can also use D-3-hydroxyacyl-CoA and cis-3-enoyl-CoA as substrate. The polypeptide is Fatty acid oxidation complex subunit alpha (Escherichia coli O81 (strain ED1a)).